The chain runs to 672 residues: Glycine--tRNA ligase beta subunit (672 aa).

It belongs to the class-II aminoacyl-tRNA synthetase family. In terms of assembly, tetramer of two alpha and two beta subunits.

It is found in the cytoplasm. It catalyses the reaction tRNA(Gly) + glycine + ATP = glycyl-tRNA(Gly) + AMP + diphosphate. This chain is Glycine--tRNA ligase beta subunit (glyS), found in Thermotoga maritima (strain ATCC 43589 / DSM 3109 / JCM 10099 / NBRC 100826 / MSB8).